A 138-amino-acid polypeptide reads, in one-letter code: Large ribosomal subunit protein bL17 (138 aa).

The protein belongs to the bacterial ribosomal protein bL17 family. Part of the 50S ribosomal subunit. Contacts protein L32.

The protein is Large ribosomal subunit protein bL17 of Methylorubrum extorquens (strain CM4 / NCIMB 13688) (Methylobacterium extorquens).